The following is a 677-amino-acid chain: DNA ligase (677 aa).

NAD(+) is bound by residues 38–42 (DSVYD), 87–88 (SL), and Glu-119. The N6-AMP-lysine intermediate role is filled by Lys-121. Arg-142, Glu-179, Lys-296, and Lys-320 together coordinate NAD(+). Cys-414, Cys-417, Cys-432, and Cys-438 together coordinate Zn(2+). The BRCT domain maps to 595–677 (VVKSEIAGKT…LKLLKSKGVF (83 aa)).

It belongs to the NAD-dependent DNA ligase family. LigA subfamily. Requires Mg(2+) as cofactor. Mn(2+) serves as cofactor.

The enzyme catalyses NAD(+) + (deoxyribonucleotide)n-3'-hydroxyl + 5'-phospho-(deoxyribonucleotide)m = (deoxyribonucleotide)n+m + AMP + beta-nicotinamide D-nucleotide.. Functionally, DNA ligase that catalyzes the formation of phosphodiester linkages between 5'-phosphoryl and 3'-hydroxyl groups in double-stranded DNA using NAD as a coenzyme and as the energy source for the reaction. It is essential for DNA replication and repair of damaged DNA. This Coxiella burnetii (strain CbuG_Q212) (Coxiella burnetii (strain Q212)) protein is DNA ligase.